We begin with the raw amino-acid sequence, 225 residues long: Thymidylate kinase (225 aa).

9 to 16 is an ATP binding site; the sequence is GIEGCGKT.

The protein belongs to the thymidylate kinase family.

It carries out the reaction dTMP + ATP = dTDP + ADP. Phosphorylation of dTMP to form dTDP in both de novo and salvage pathways of dTTP synthesis. The sequence is that of Thymidylate kinase from Citrifermentans bemidjiense (strain ATCC BAA-1014 / DSM 16622 / JCM 12645 / Bem) (Geobacter bemidjiensis).